Here is a 531-residue protein sequence, read N- to C-terminus: SWI/SNF-related matrix-associated actin-dependent regulator of chromatin subfamily D member 2 (531 aa).

Asymmetric dimethylarginine occurs at positions 81 and 104. Serine 203 is modified (phosphoserine). Positions 205 to 227 are disordered; it reads SKAEGDTAGTTGTPGGTPAGDKV. Threonine 217 bears the Phosphothreonine mark. Residue lysine 226 forms a Glycyl lysine isopeptide (Lys-Gly) (interchain with G-Cter in SUMO2) linkage. Residues 306 to 383 form the SWIB/MDM2 domain; the sequence is HQPPQYKLDP…PMKLAGLLQH (78 aa).

It belongs to the SMARCD family. In terms of assembly, component of the multiprotein chromatin-remodeling complexes SWI/SNF: SWI/SNF-A (BAF), SWI/SNF-B (PBAF) and related complexes. The canonical complex contains a catalytic subunit (either SMARCA4/BRG1/BAF190A or SMARCA2/BRM/BAF190B), and at least SMARCE1, ACTL6A/BAF53, SMARCC1/BAF155, SMARCC2/BAF170, and SMARCB1/SNF5/BAF47. Other subunits specific to each of the complexes may also be present permitting several possible combinations developmentally and tissue specific. Component of the BAF complex, which includes at least actin (ACTB), ARID1A/BAF250A, ARID1B/BAF250B, SMARCA2/BRM, SMARCA4/BRG1, ACTL6A/BAF53, ACTL6B/BAF53B, SMARCE1/BAF57, SMARCC1/BAF155, SMARCC2/BAF170, SMARCB1/SNF5/INI1, and one or more SMARCD1/BAF60A, SMARCD2/BAF60B, or SMARCD3/BAF60C. In muscle cells, the BAF complex also contains DPF3. Component of the SWI/SNF-B (PBAF) chromatin remodeling complex, at least composed of SMARCA4/BRG1, SMARCB1/BAF47/SNF5, ACTL6A/BAF53A or ACTL6B/BAF53B, SMARCE1/BAF57, SMARCD1/BAF60A, SMARCD2/BAF60B, perhaps SMARCD3/BAF60C, SMARCC1/BAF155, SMARCC2/BAF170, PBRM1/BAF180, ARID2/BAF200 and actin (ACTB). Interacts with UNKL. Interacts with CEBPE. Ubiquitinated through a signaling process involving RAC1 and the RING finger protein UNKL.

The protein localises to the nucleus. Involved in transcriptional activation and repression of select genes by chromatin remodeling (alteration of DNA-nucleosome topology). Component of SWI/SNF chromatin remodeling complexes that carry out key enzymatic activities, changing chromatin structure by altering DNA-histone contacts within a nucleosome in an ATP-dependent manner. Critical regulator of myeloid differentiation, controlling granulocytopoiesis and the expression of genes involved in neutrophil granule formation. The protein is SWI/SNF-related matrix-associated actin-dependent regulator of chromatin subfamily D member 2 (SMARCD2) of Bos taurus (Bovine).